The chain runs to 176 residues: ATP-dependent protease subunit HslV (176 aa).

The active site involves Thr2. Residues Gly157, Cys160, and Thr163 each coordinate Na(+).

It belongs to the peptidase T1B family. HslV subfamily. As to quaternary structure, a double ring-shaped homohexamer of HslV is capped on each side by a ring-shaped HslU homohexamer. The assembly of the HslU/HslV complex is dependent on binding of ATP.

It is found in the cytoplasm. It carries out the reaction ATP-dependent cleavage of peptide bonds with broad specificity.. With respect to regulation, allosterically activated by HslU binding. Functionally, protease subunit of a proteasome-like degradation complex believed to be a general protein degrading machinery. The protein is ATP-dependent protease subunit HslV of Escherichia coli O45:K1 (strain S88 / ExPEC).